Here is a 333-residue protein sequence, read N- to C-terminus: Ketol-acid reductoisomerase (NAD(P)(+)) (333 aa).

One can recognise a KARI N-terminal Rossmann domain in the interval 2 to 182 (AKIYYDEDAS…GATRAGVIET (181 aa)). NADP(+) contacts are provided by residues 25 to 28 (YGSQ), S51, and 83 to 86 (DTVQ). H108 is a catalytic residue. Residue G134 coordinates NADP(+). The region spanning 183–327 (TFREETETDL…KELRQMMPWL (145 aa)) is the KARI C-terminal knotted domain. Mg(2+) is bound by residues D191, E195, E227, and E231. S252 lines the substrate pocket.

The protein belongs to the ketol-acid reductoisomerase family. The cofactor is Mg(2+).

The enzyme catalyses (2R)-2,3-dihydroxy-3-methylbutanoate + NAD(+) = (2S)-2-acetolactate + NADH + H(+). It carries out the reaction (2R)-2,3-dihydroxy-3-methylbutanoate + NADP(+) = (2S)-2-acetolactate + NADPH + H(+). The protein operates within amino-acid biosynthesis; L-isoleucine biosynthesis; L-isoleucine from 2-oxobutanoate: step 2/4. It functions in the pathway amino-acid biosynthesis; L-valine biosynthesis; L-valine from pyruvate: step 2/4. Involved in the biosynthesis of branched-chain amino acids (BCAA). Catalyzes an alkyl-migration followed by a ketol-acid reduction of (S)-2-acetolactate (S2AL) to yield (R)-2,3-dihydroxy-isovalerate. In the isomerase reaction, S2AL is rearranged via a Mg-dependent methyl migration to produce 3-hydroxy-3-methyl-2-ketobutyrate (HMKB). In the reductase reaction, this 2-ketoacid undergoes a metal-dependent reduction by NADPH or NADH to yield (R)-2,3-dihydroxy-isovalerate. This Hydrogenobaculum sp. (strain Y04AAS1) protein is Ketol-acid reductoisomerase (NAD(P)(+)).